Here is a 405-residue protein sequence, read N- to C-terminus: CMP-sialic acid transporter 4 (405 aa).

At 1–43 (MQRNGVMECSVCHSKVVAPSPRSVSRAYDKHRSKISSKYRALN) the chain is on the cytoplasmic side. Residues 44–64 (FLLVSGDCILVGLQPILVFMS) traverse the membrane as a helical segment. The Lumenal segment spans residues 65-74 (KVDGKFQFSP). Residues 75-95 (ISVNFLTEVTKVIFAIVMLII) form a helical membrane-spanning segment. Over 96–121 (QSRKQKVGEKPLLSLSTFVQAARNNA) the chain is Cytoplasmic. The chain crosses the membrane as a helical span at residues 122 to 142 (LLAVPALLYAINNYLKFIMQL). Tyr-143 is a topological domain (lumenal). Residues 144-164 (FSPATVKMLSNLKVLVIAILL) traverse the membrane as a helical segment. Topologically, residues 165 to 171 (KFIMRRK) are cytoplasmic. The chain crosses the membrane as a helical span at residues 172–192 (FSIIQWEALALLLIGISVNQL). The Lumenal portion of the chain corresponds to 193–203 (SSIPDGTKSFG). A helical membrane pass occupies residues 204–224 (LAVTTIAYIYTLIFVTVPSLA). The Cytoplasmic portion of the chain corresponds to 225–244 (SVYNEYALKSQFDTSIYLQN). Residues 245–265 (LFLYGYGAIFNFLGILGTVIF) traverse the membrane as a helical segment. Topologically, residues 266-281 (QGPESFDILRGHSRAT) are lumenal. Residues 282–302 (MFLICNNAAQGILSSFFFKYA) form a helical membrane-spanning segment. The Cytoplasmic portion of the chain corresponds to 303–322 (DTILKKYSSTVATIFTGLAS). Residues 323-343 (AAFLGHTLTVNFLLGISIVFI) form a helical membrane-spanning segment. Residues 344 to 405 (SMHQFFSPLA…TDERKPLLPI (62 aa)) are Lumenal-facing.

This sequence belongs to the nucleotide-sugar transporter family. CMP-Sialate:CMP antiporter (TC 2.A.7.12) subfamily.

The protein localises to the golgi apparatus membrane. Sugar transporter involved in the transport of CMP-sialic acid from the cytoplasm into the Golgi. May transport important nucleotide sugars such as CMP-Kdo (2-keto-3-deoxy-D-manno-octulosonic acid) in physiological conditions. This chain is CMP-sialic acid transporter 4, found in Oryza sativa subsp. japonica (Rice).